Consider the following 104-residue polypeptide: UPF0134 protein MPN_104 (104 aa).

This sequence belongs to the UPF0134 family.

The polypeptide is UPF0134 protein MPN_104 (Mycoplasma pneumoniae (strain ATCC 29342 / M129 / Subtype 1) (Mycoplasmoides pneumoniae)).